The primary structure comprises 232 residues: 2,3,4,5-tetrahydropyridine-2,6-dicarboxylate N-acetyltransferase (232 aa).

It belongs to the transferase hexapeptide repeat family. DapH subfamily.

It catalyses the reaction (S)-2,3,4,5-tetrahydrodipicolinate + acetyl-CoA + H2O = L-2-acetamido-6-oxoheptanedioate + CoA. The protein operates within amino-acid biosynthesis; L-lysine biosynthesis via DAP pathway; LL-2,6-diaminopimelate from (S)-tetrahydrodipicolinate (acetylase route): step 1/3. Functionally, catalyzes the transfer of an acetyl group from acetyl-CoA to tetrahydrodipicolinate. The chain is 2,3,4,5-tetrahydropyridine-2,6-dicarboxylate N-acetyltransferase from Streptococcus thermophilus (strain CNRZ 1066).